The primary structure comprises 1292 residues: ABC multidrug transporter MDR5 (1292 aa).

The interval 1–43 (MTEEPKPVTPVLRDGEAGLDTTAPTEAGSLGEEAPKKEADGIV) is disordered. Transmembrane regions (helical) follow at residues 79–99 (ICGF…TIIF) and 128–148 (LWFV…TICF). The region spanning 81 to 370 (GFFAAVASGT…IAPTLGEFTK (290 aa)) is the ABC transmembrane type-1 1 domain. Residue N149 is glycosylated (N-linked (GlcNAc...) asparagine). 4 helical membrane-spanning segments follow: residues 202-222 (VGTC…AFTQ), 226-246 (LTLP…ITVA), 314-334 (EFFI…KLLL), and 344-364 (ILTV…IAPT). Residues 405–650 (LELSNAVFSY…KGQYWSLVNA (246 aa)) form the ABC transporter 1 domain. Residue 440–447 (GASGSGKS) coordinates ATP. N-linked (GlcNAc...) asparagine glycosylation is present at N494. A disordered region spans residues 656 to 691 (ASDDSSSDTDKETDTQPAEILEKHATTKSTHSKVPH). Residues 663-680 (DTDKETDTQPAEILEKHA) are compositionally biased toward basic and acidic residues. Transmembrane regions (helical) follow at residues 720-740 (HWLF…AFPA) and 768-788 (LMFF…GFFL). An ABC transmembrane type-1 2 domain is found at 725–1012 (LLGGIASVVS…IFGFTMNTTK (288 aa)). Residue N820 is glycosylated (N-linked (GlcNAc...) asparagine). A run of 4 helical transmembrane segments spans residues 844-864 (IGLI…ALVT), 866-886 (WKLA…AGFI), 949-969 (IAMI…ALAF), and 986-1006 (FFVI…IFGF). N-linked (GlcNAc...) asparagine glycosylation is found at N1009, N1031, and N1052. The ABC transporter 2 domain occupies 1048–1285 (VEFRNVSFSY…KGRYFEMCKA (238 aa)). 1083–1090 (GPSGCGKT) contributes to the ATP binding site.

This sequence belongs to the ABC transporter superfamily. ABCB family. Multidrug resistance exporter (TC 3.A.1.201) subfamily.

Its subcellular location is the cell membrane. The catalysed reaction is itraconazole(in) + ATP + H2O = itraconazole(out) + ADP + phosphate + H(+). In terms of biological role, pleiotropic ABC efflux transporter involved in the modulation susceptibility to itraconazole. This is ABC multidrug transporter MDR5 from Trichophyton rubrum (strain ATCC MYA-4607 / CBS 118892) (Athlete's foot fungus).